The sequence spans 264 residues: Neuferricin (264 aa).

The N-terminal stretch at 1–22 (MLRCGGRGLLLGLAVAAAAVMA) is a signal peptide. The Cytochrome b5 heme-binding domain maps to 35 to 134 (FRLFIPEELS…KNYVCVGRVT (100 aa)).

It belongs to the cytochrome b5 family. MAPR subfamily.

It is found in the secreted. Functionally, heme-binding protein which promotes neuronal but not astrocyte differentiation. In Homo sapiens (Human), this protein is Neuferricin.